Here is a 513-residue protein sequence, read N- to C-terminus: Putative ribose/galactose/methyl galactoside import ATP-binding protein 3 (513 aa).

ABC transporter domains lie at 15-252 and 263-508; these read IELT…VGRQ and TSAN…TQRE. 47 to 54 is an ATP binding site; it reads GENGAGKS.

The protein belongs to the ABC transporter superfamily. Carbohydrate importer 2 (CUT2) (TC 3.A.1.2) family.

The protein localises to the cell inner membrane. It carries out the reaction D-ribose(out) + ATP + H2O = D-ribose(in) + ADP + phosphate + H(+). The enzyme catalyses D-galactose(out) + ATP + H2O = D-galactose(in) + ADP + phosphate + H(+). In terms of biological role, part of an ABC transporter complex involved in carbohydrate import. Could be involved in ribose, galactose and/or methyl galactoside import. Responsible for energy coupling to the transport system. The chain is Putative ribose/galactose/methyl galactoside import ATP-binding protein 3 from Burkholderia ambifaria (strain ATCC BAA-244 / DSM 16087 / CCUG 44356 / LMG 19182 / AMMD) (Burkholderia cepacia (strain AMMD)).